Consider the following 110-residue polypeptide: UPF0122 protein BCA_3946 (110 aa).

It belongs to the UPF0122 family.

In terms of biological role, might take part in the signal recognition particle (SRP) pathway. This is inferred from the conservation of its genetic proximity to ftsY/ffh. May be a regulatory protein. This is UPF0122 protein BCA_3946 from Bacillus cereus (strain 03BB102).